The following is a 359-amino-acid chain: tRNA-specific 2-thiouridylase MnmA (359 aa).

Residues 9 to 16 (GISGGVDS) and M35 contribute to the ATP site. Residues 95-97 (NPD) are interaction with target base in tRNA. Catalysis depends on C100, which acts as the Nucleophile. The cysteines at positions 100 and 197 are disulfide-linked. G124 contacts ATP. The segment at 147–149 (KDQ) is interaction with tRNA. The active-site Cysteine persulfide intermediate is C197. The tract at residues 309–310 (RY) is interaction with tRNA.

This sequence belongs to the MnmA/TRMU family.

The protein resides in the cytoplasm. The enzyme catalyses S-sulfanyl-L-cysteinyl-[protein] + uridine(34) in tRNA + AH2 + ATP = 2-thiouridine(34) in tRNA + L-cysteinyl-[protein] + A + AMP + diphosphate + H(+). Catalyzes the 2-thiolation of uridine at the wobble position (U34) of tRNA, leading to the formation of s(2)U34. This chain is tRNA-specific 2-thiouridylase MnmA, found in Francisella tularensis subsp. holarctica (strain FTNF002-00 / FTA).